We begin with the raw amino-acid sequence, 341 residues long: Ferrochelatase (341 aa).

Positions 189 and 293 each coordinate Fe cation.

Belongs to the ferrochelatase family.

The protein localises to the cytoplasm. The catalysed reaction is heme b + 2 H(+) = protoporphyrin IX + Fe(2+). Its pathway is porphyrin-containing compound metabolism; protoheme biosynthesis; protoheme from protoporphyrin-IX: step 1/1. Functionally, catalyzes the ferrous insertion into protoporphyrin IX. The polypeptide is Ferrochelatase (Stutzerimonas stutzeri (strain A1501) (Pseudomonas stutzeri)).